We begin with the raw amino-acid sequence, 119 residues long: MGIMHTSELLKHIYDINLSYLLLAQRLIVQDKASAMFRLGINEEMATTLAALTLPQMVKLAETNQLVCHFRFDSHQTITQLTQDSRVNDLQQIHTGIMLSTRLLNDVNQPEEALRKKRA.

Belongs to the FlhD family. In terms of assembly, homodimer; disulfide-linked. Forms a heterohexamer composed of two FlhC and four FlhD subunits. Each FlhC binds a FlhD dimer, forming a heterotrimer, and a hexamer assembles by dimerization of two heterotrimers.

The protein localises to the cytoplasm. In terms of biological role, functions in complex with FlhC as a master transcriptional regulator that regulates transcription of several flagellar and non-flagellar operons by binding to their promoter region. Activates expression of class 2 flagellar genes, including fliA, which is a flagellum-specific sigma factor that turns on the class 3 genes. Also regulates genes whose products function in a variety of physiological pathways. The sequence is that of Flagellar transcriptional regulator FlhD from Shigella boydii serotype 4 (strain Sb227).